Reading from the N-terminus, the 274-residue chain is 3-methyl-2-oxobutanoate hydroxymethyltransferase (274 aa).

Mg(2+) is bound by residues D50 and D89. Residues 50 to 51 (DS), D89, and K119 contribute to the 3-methyl-2-oxobutanoate site. E121 contacts Mg(2+). The Proton acceptor role is filled by E188.

Belongs to the PanB family. Homodecamer; pentamer of dimers. Mg(2+) serves as cofactor.

Its subcellular location is the cytoplasm. The catalysed reaction is 3-methyl-2-oxobutanoate + (6R)-5,10-methylene-5,6,7,8-tetrahydrofolate + H2O = 2-dehydropantoate + (6S)-5,6,7,8-tetrahydrofolate. Its pathway is cofactor biosynthesis; (R)-pantothenate biosynthesis; (R)-pantoate from 3-methyl-2-oxobutanoate: step 1/2. Catalyzes the reversible reaction in which hydroxymethyl group from 5,10-methylenetetrahydrofolate is transferred onto alpha-ketoisovalerate to form ketopantoate. In Methylorubrum extorquens (strain PA1) (Methylobacterium extorquens), this protein is 3-methyl-2-oxobutanoate hydroxymethyltransferase.